Here is a 513-residue protein sequence, read N- to C-terminus: Keratin, type II cuticular Hb2 (513 aa).

Residues 1–120 (MSYHSFQPGS…PTVQRVKRDE (120 aa)) are head. The region spanning 120–431 (EKEQIKCLNN…RLLEGEEHRL (312 aa)) is the IF rod domain. Residues 121–155 (KEQIKCLNNRFASFINKVRFLEQKNKLLETKWNFM) form a coil 1A region. The interval 156-165 (QQQRCCQTNI) is linker 1. Residues 166-266 (EPIFEGYISA…YEEEICLLQS (101 aa)) form a coil 1B region. Residues 267 to 283 (QISETSVIVKMDNSREL) form a linker 12 region. The interval 284–427 (DVDGIIAEIK…ATYRRLLEGE (144 aa)) is coil 2. Residues 428 to 513 (EHRLCEGIGP…AGGSSPSHKH (86 aa)) form a tail region.

This sequence belongs to the intermediate filament family. Heterotetramer of two type I and two type II keratins.

In Homo sapiens (Human), this protein is Keratin, type II cuticular Hb2 (KRT82).